A 150-amino-acid polypeptide reads, in one-letter code: SsrA-binding protein (150 aa).

Belongs to the SmpB family.

The protein resides in the cytoplasm. Required for rescue of stalled ribosomes mediated by trans-translation. Binds to transfer-messenger RNA (tmRNA), required for stable association of tmRNA with ribosomes. tmRNA and SmpB together mimic tRNA shape, replacing the anticodon stem-loop with SmpB. tmRNA is encoded by the ssrA gene; the 2 termini fold to resemble tRNA(Ala) and it encodes a 'tag peptide', a short internal open reading frame. During trans-translation Ala-aminoacylated tmRNA acts like a tRNA, entering the A-site of stalled ribosomes, displacing the stalled mRNA. The ribosome then switches to translate the ORF on the tmRNA; the nascent peptide is terminated with the 'tag peptide' encoded by the tmRNA and targeted for degradation. The ribosome is freed to recommence translation, which seems to be the essential function of trans-translation. This Coprothermobacter proteolyticus (strain ATCC 35245 / DSM 5265 / OCM 4 / BT) protein is SsrA-binding protein.